The primary structure comprises 295 residues: Alpha-1A adrenergic receptor (295 aa).

Residues 1-27 lie on the Extracellular side of the membrane; the sequence is MVFLSGNASDSSNCTHPPAPVNISKAI. Asn7, Asn13, and Asn22 each carry an N-linked (GlcNAc...) asparagine glycan. A helical transmembrane segment spans residues 28–51; that stretch reads LLGVILGGLIIFGVLGNILVILSV. Residues 52–64 are Cytoplasmic-facing; the sequence is ACHRHLHSVTHYY. Residues 65-88 traverse the membrane as a helical segment; sequence IVNLAVADLLLTSTVLPFSAIFEI. The Extracellular portion of the chain corresponds to 89 to 99; it reads LGYWAFGRVFC. The cysteines at positions 99 and 176 are disulfide-linked. The helical transmembrane segment at 100–122 threads the bilayer; the sequence is NIWAAVDVLCCTASIMGLCIISI. Residues 123–143 lie on the Cytoplasmic side of the membrane; that stretch reads DRYIGVSYPLRYPTIVTQKRG. A helical membrane pass occupies residues 144–167; it reads LMALLCVWALSLVISIGPLFGWRQ. Residues 168–181 lie on the Extracellular side of the membrane; the sequence is PAPEDETICQITEE. A helical transmembrane segment spans residues 182-205; the sequence is PGYVLFSALGSFYVPLTIILVMYC. Residues 206-273 lie on the Cytoplasmic side of the membrane; that stretch reads RVYVVAKRES…FSREKKAAKT (68 aa). The residue at position 215 (Ser215) is a Phosphoserine; by PKA. Residues 274–295 form a helical membrane-spanning segment; it reads LGIVVGCFVLCWLPFFLVMPIG.

The protein belongs to the G-protein coupled receptor 1 family. Adrenergic receptor subfamily. ADRA1A sub-subfamily. In terms of assembly, homo- and heterooligomer. Heterooligomerizes with ADRA1B homooligomers in cardiac myocytes. Interacts with CAVIN4.

It localises to the nucleus membrane. Its subcellular location is the cell membrane. It is found in the cytoplasm. The protein localises to the membrane. The protein resides in the caveola. In terms of biological role, this alpha-adrenergic receptor mediates its action by association with G proteins that activate a phosphatidylinositol-calcium second messenger system. Its effect is mediated by G(q) and G(11) proteins. Nuclear ADRA1A-ADRA1B heterooligomers regulate phenylephrine (PE)-stimulated ERK signaling in cardiac myocytes. The polypeptide is Alpha-1A adrenergic receptor (ADRA1A) (Canis lupus familiaris (Dog)).